The sequence spans 69 residues: Alpha-conotoxin-like Tx1 (69 aa).

Residues 1–21 (MGMRMMFVVFLLVVLASTVVS) form the signal peptide. A propeptide spanning residues 22–49 (STSGRRAFHGRNAAAKASGLVSLTDRRP) is cleaved from the precursor. 2 disulfide bridges follow: cysteine 51–cysteine 57 and cysteine 52–cysteine 65. Positions 53 to 55 (SDP) are ser-Xaa-Pro motif, crucial for potent interaction with nAChR. Glycine amide is present on glycine 66.

Belongs to the conotoxin A superfamily. Expressed by the venom duct.

Its subcellular location is the secreted. Its function is as follows. Alpha-conotoxins act on postsynaptic membranes, they bind to the nicotinic acetylcholine receptors (nAChR) and thus inhibit them. The protein is Alpha-conotoxin-like Tx1 of Conus textile (Cloth-of-gold cone).